The sequence spans 188 residues: RxLR effector protein Avh241 (188 aa).

An N-terminal signal peptide occupies residues 1–16 (MRQYCLLLIVLALAAA). A RxLR-dEER motif is present at residues 43–58 (RLLRSEPQDEDTFEDR). The Host plasma membrane localization motif signature appears at 73 to 78 (GAAKAK).

This sequence belongs to the RxLR effector family.

The protein localises to the secreted. The protein resides in the host cell membrane. Its function is as follows. Effector that triggers cell death in a variety of plant species (including tobacco, tomato and soybean), regardless of the Rps genes present. Avh241 interacts with the plant immune system via at least two different mechanisms, one recognized by plants dependent on subcellular localization and one promoting infection independent on membrane localization. The cell death triggered by Avh241 in N.benthamiana requires the two host mitogen-activated protein kinases, MEK2 and WIPK. This Phytophthora sojae (strain P6497) (Soybean stem and root rot agent) protein is RxLR effector protein Avh241.